The chain runs to 226 residues: uncharacterized protein (226 aa).

The region spanning 4-226 is the ABC transporter domain; that stretch reads LQFQQVGYWY…FTVKENVAVV (223 aa). Position 38–45 (38–45) interacts with ATP; the sequence is GTSGTGKT.

This sequence belongs to the ABC transporter superfamily.

This is an uncharacterized protein from Bacillus subtilis (strain 168).